We begin with the raw amino-acid sequence, 312 residues long: MPVYRPPRIAASEITPERFFLDRRSFLAAAGGLVLGGTGMAHAAALKTSASPYKVDETLTPEKDVTSYNNFYEFGTGKADPATNSASFKPTPWTVKVDGLVGKPRQFGLDELLALPLEERIYRMRCVEAWSMVIPWVGFPLASLLDKVEPLGSAKYVAFETVVRPEEMPGQAGYFQPLPWPYQEGLRLDEARHPLTILAVGLYGKTLPNQNGAPLRLVVPWKYGFKGIKSIVRISLTETAPPCTWNLAAPDEYGFYANVNPAVDHPRWSQATENRIGEGGFFGSNRRDTLPFNGYADEVAGLYAGMDLRVNF.

Residues 1-45 (MPVYRPPRIAASEITPERFFLDRRSFLAAAGGLVLGGTGMAHAAA) constitute a signal peptide (tat-type signal). Mo-molybdopterin-binding positions include Asn-69, 72–73 (YE), Cys-126, Thr-161, Asn-211, Arg-216, and 227–229 (GIK).

This sequence belongs to the MsrP family. Heterodimer of a catalytic subunit (MsrP) and a heme-binding subunit (MsrQ). Requires Mo-molybdopterin as cofactor. Post-translationally, predicted to be exported by the Tat system. The position of the signal peptide cleavage has not been experimentally proven.

The protein localises to the periplasm. It carries out the reaction L-methionyl-[protein] + a quinone + H2O = L-methionyl-(S)-S-oxide-[protein] + a quinol. It catalyses the reaction L-methionyl-[protein] + a quinone + H2O = L-methionyl-(R)-S-oxide-[protein] + a quinol. Part of the MsrPQ system that repairs oxidized periplasmic proteins containing methionine sulfoxide residues (Met-O), using respiratory chain electrons. Thus protects these proteins from oxidative-stress damage caused by reactive species of oxygen and chlorine generated by the host defense mechanisms. MsrPQ is essential for the maintenance of envelope integrity under bleach stress, rescuing a wide series of structurally unrelated periplasmic proteins from methionine oxidation. The catalytic subunit MsrP is non-stereospecific, being able to reduce both (R-) and (S-) diastereoisomers of methionine sulfoxide. This is Protein-methionine-sulfoxide reductase catalytic subunit MsrP from Sinorhizobium fredii (strain NBRC 101917 / NGR234).